Reading from the N-terminus, the 698-residue chain is Elongation factor G (698 aa).

Positions 6–281 (ENIRNIGICA…AVVDYLPSPI (276 aa)) constitute a tr-type G domain. GTP is bound by residues 15 to 22 (AHIDAGKT), 79 to 83 (DTPGH), and 133 to 136 (NKMD).

Belongs to the TRAFAC class translation factor GTPase superfamily. Classic translation factor GTPase family. EF-G/EF-2 subfamily.

It localises to the cytoplasm. Catalyzes the GTP-dependent ribosomal translocation step during translation elongation. During this step, the ribosome changes from the pre-translocational (PRE) to the post-translocational (POST) state as the newly formed A-site-bound peptidyl-tRNA and P-site-bound deacylated tRNA move to the P and E sites, respectively. Catalyzes the coordinated movement of the two tRNA molecules, the mRNA and conformational changes in the ribosome. This chain is Elongation factor G, found in Rickettsia bellii (strain RML369-C).